The chain runs to 326 residues: Zona pellucida-binding protein 2 (326 aa).

Residues 1-20 (MLAWALLSAVLWSLAGVGSA) form the signal peptide. 3 N-linked (GlcNAc...) asparagine glycosylation sites follow: Asn-86, Asn-220, and Asn-256.

This sequence belongs to the zona pellucida-binding protein Sp38 family. Post-translationally, N-glycosylated.

It is found in the secreted. The protein localises to the cytoplasmic vesicle. The protein resides in the secretory vesicle. Its subcellular location is the acrosome. Its function is as follows. Is implicated in sperm-oocyte interaction during fertilization. The protein is Zona pellucida-binding protein 2 (Zpbp2) of Rattus norvegicus (Rat).